A 103-amino-acid chain; its full sequence is Large ribosomal subunit protein bL21 (103 aa).

It belongs to the bacterial ribosomal protein bL21 family. In terms of assembly, part of the 50S ribosomal subunit. Contacts protein L20.

Its function is as follows. This protein binds to 23S rRNA in the presence of protein L20. The chain is Large ribosomal subunit protein bL21 from Mycobacteroides abscessus (strain ATCC 19977 / DSM 44196 / CCUG 20993 / CIP 104536 / JCM 13569 / NCTC 13031 / TMC 1543 / L948) (Mycobacterium abscessus).